The sequence spans 208 residues: Na(+)-translocating NADH-quinone reductase subunit D (208 aa).

The next 5 helical transmembrane spans lie at 42–62 (IVMT…ISLI), 70–90 (VRII…DQIL), 103–123 (VFVG…AFAM), 131–151 (FVDG…VAFI), and 178–198 (NGLF…IWGI).

The protein belongs to the NqrDE/RnfAE family. Composed of six subunits; NqrA, NqrB, NqrC, NqrD, NqrE and NqrF.

Its subcellular location is the cell inner membrane. The enzyme catalyses a ubiquinone + n Na(+)(in) + NADH + H(+) = a ubiquinol + n Na(+)(out) + NAD(+). NQR complex catalyzes the reduction of ubiquinone-1 to ubiquinol by two successive reactions, coupled with the transport of Na(+) ions from the cytoplasm to the periplasm. NqrA to NqrE are probably involved in the second step, the conversion of ubisemiquinone to ubiquinol. The protein is Na(+)-translocating NADH-quinone reductase subunit D of Pasteurella multocida (strain Pm70).